A 417-amino-acid polypeptide reads, in one-letter code: MAEIKNYTLNFGPQHPAAHGVLRLVLELDGEVIQRADPHIGLLHRATEKLAESKTFIQSVPYMDRLDYVSMMVNEHGYVLAIERLLGIDVPERAQYIRVLFDEITRVLNHLMWIGAHALDVGAMAVFLYAFREREDLMDVYEAVSGARMHAAYYRPGGVYRDLPDAMPQYKASKIRNEKALARMNEARSGSVLDFIDDFFTRFPKCVDEYETLLTDNRIWKQRLVGIGVVSPERALQMGLTGPMLRGSGIAWDLRKKQPYEVYDRMDFDVPVGVNGDCYDRYLVRVEEMRQSIRIAKQCIEWLRKNPGPVMTDNHKVAPPSRVGMKTNMEDLIHHFKLFTEGFHVPEGEAYAAVEHPKGEFGIYLVSDGANKPYRLKIRAPGFAHLASLDEMARGHMIADAVTIIGTQDIVFGEIDR.

This sequence belongs to the complex I 49 kDa subunit family. In terms of assembly, NDH-1 is composed of 14 different subunits. Subunits NuoB, C, D, E, F, and G constitute the peripheral sector of the complex.

Its subcellular location is the cell inner membrane. The enzyme catalyses a quinone + NADH + 5 H(+)(in) = a quinol + NAD(+) + 4 H(+)(out). Its function is as follows. NDH-1 shuttles electrons from NADH, via FMN and iron-sulfur (Fe-S) centers, to quinones in the respiratory chain. The immediate electron acceptor for the enzyme in this species is believed to be ubiquinone. Couples the redox reaction to proton translocation (for every two electrons transferred, four hydrogen ions are translocated across the cytoplasmic membrane), and thus conserves the redox energy in a proton gradient. In Burkholderia ambifaria (strain ATCC BAA-244 / DSM 16087 / CCUG 44356 / LMG 19182 / AMMD) (Burkholderia cepacia (strain AMMD)), this protein is NADH-quinone oxidoreductase subunit D.